We begin with the raw amino-acid sequence, 239 residues long: Ribonuclease HII (239 aa).

The RNase H type-2 domain maps to 30–221; sequence GPVAGVDEVG…VRRVATRSNG (192 aa). 3 residues coordinate a divalent metal cation: Asp36, Glu37, and Asp130. Positions 217–239 are disordered; the sequence is TRSNGAATAEREADPPQERDGTG. Positions 225–239 are enriched in basic and acidic residues; that stretch reads AEREADPPQERDGTG.

The protein belongs to the RNase HII family. Mn(2+) serves as cofactor. Mg(2+) is required as a cofactor.

It is found in the cytoplasm. The catalysed reaction is Endonucleolytic cleavage to 5'-phosphomonoester.. Endonuclease that specifically degrades the RNA of RNA-DNA hybrids. The chain is Ribonuclease HII from Mycobacterium ulcerans (strain Agy99).